A 686-amino-acid chain; its full sequence is Endonuclease GajA (686 aa).

The tract at residues 1-423 (MYLKSLKIYN…NYVTTKNNYT (423 aa)) is ATPase domain. Position 52–56 (52–56 (NCGKT)) interacts with ATP. Positions 463–599 (FFSDAIIFVE…TSFEEAFILT (137 aa)) are toprim domain. 4 residues coordinate a divalent metal cation: glutamate 472, glutamate 476, aspartate 559, and glutamate 604.

In terms of assembly, homotetramer. Forms the core of the anti-phage defense complex. Interacts with GajB; 2 GajB dimers dock at opposite sides of the GajA complex to form a 4:4 GajA-GajB assembly (GajAB). GajAB interacts with Bacillus phage Phi3T Gad1 protein; this interaction forms a 4:4:8 GajAB-Gad1 complex and leads to GajAB inhibition. It depends on Mg(2+) as a cofactor.

Component of antiviral defense system Gabija type II, composed of GajA and GajB. Probably a nicking endonuclease that is strongly inhibited by physiological levels of nucleotides (NTP and dNTP). Expression of Gabija type II in B.subtilis (strain BEST7003) confers resistance to phages phi105, and SpBeta. During viral replication, when nucleotides are rapidly consumed, it is de-suppressed and degrades target DNA. This chain is Endonuclease GajA, found in Bacillus cereus (strain HuB5-5).